Here is a 140-residue protein sequence, read N- to C-terminus: MKFFVPAFLFAATAMALPGSGSAAGVAPHSNNEVEDAVNKCGDGAHMSCCNKINKNEGISQNNIGVLSNVLGAIGSEGLGLGQGCTQLDIPISVLGAAGLTDFLKKNCQQNIACCQNSNSQANGNLVGVAAPCVSFGGLL.

Positions 1–23 are cleaved as a signal peptide; the sequence is MKFFVPAFLFAATAMALPGSGSA. 4 disulfides stabilise this stretch: Cys-41–Cys-114, Cys-49–Cys-108, Cys-50–Cys-85, and Cys-115–Cys-133.

This sequence belongs to the fungal hydrophobin family.

The protein resides in the secreted. It localises to the cell wall. Its function is as follows. Aerial growth, conidiation, and dispersal of filamentous fungi in the environment rely upon a capability of their secreting small amphipathic proteins called hydrophobins (HPBs) with low sequence identity. Class I can self-assemble into an outermost layer of rodlet bundles on aerial cell surfaces, conferring cellular hydrophobicity that supports fungal growth, development and dispersal; whereas Class II form highly ordered films at water-air interfaces through intermolecular interactions but contribute nothing to the rodlet structure. In P.expansum, hydrophobins contribute to germination, tolerance to cold stress and mycotoxins patulin and citrinin production. HfbC is involved in the virulence on apple. The chain is Class I hydrophobin C from Penicillium expansum (Blue mold rot fungus).